A 1150-amino-acid chain; its full sequence is Cohesin subunit SCC3 (1150 aa).

Positions 1–12 (MTAVRRSTRIRT) are enriched in basic residues. The disordered stretch occupies residues 1-122 (MTAVRRSTRI…PAYHRSKKDQ (122 aa)). S28 bears the Phosphoserine mark. Residues 32–43 (VESDKITAKTQH) are compositionally biased toward basic and acidic residues. Over residues 44–72 (EEEEEQDTGESEESSSEDDYEDQDDDDYV) the composition is skewed to acidic residues. The segment covering 77–87 (AKRKSRKRKPK) has biased composition (basic residues). Residues 305–349 (LTQQAVNLEKNYLAKLSKQLSLEEKKKRPNNKTLEKLESTIAETQ) adopt a coiled-coil conformation. One can recognise an SCD domain in the interval 367–457 (FVHRYKDVSD…ERFKTKILEV (91 aa)). Position 628 is a phosphoserine (S628). The tract at residues 1065–1150 (ENPEPNKKNI…IDNSDEITQD (86 aa)) is disordered. A compositionally biased stretch (basic and acidic residues) spans 1083–1101 (QREKAPLQPNSERETDHAN).

The protein belongs to the SCC3 family. Interacts directly with MCD1 in cohesin complex. Cohesin complexes are composed of the SMC1 and SMC3 heterodimer attached via their hinge domain, MCD1 which link them, and IRR1/SCC3, which interacts with MCD1. The cohesin complex also interacts with SCC2, which is required for its association with chromosomes. Interacts with LIN1. Acetylated by ECO1.

It is found in the nucleus. It localises to the chromosome. The protein resides in the centromere. Its function is as follows. Component of cohesin complex, a complex required for the cohesion of sister chromatids after DNA replication. The cohesin complex apparently forms a large proteinaceous ring within which sister chromatids can be trapped. At anaphase, the MCD1/SCC1 subunit of the complex is cleaved and dissociates from chromatin, allowing sister chromatids to segregate. The cohesin complex may also play a role in spindle pole assembly during mitosis. This Saccharomyces cerevisiae (strain ATCC 204508 / S288c) (Baker's yeast) protein is Cohesin subunit SCC3 (IRR1).